The chain runs to 387 residues: Phosphoglycerate kinase (387 aa).

Residues 21–23, R36, 60–63, R114, and R147 contribute to the substrate site; these read DLN and HLGR. ATP-binding positions include K198, E313, and 339-342; that span reads GGDT.

Belongs to the phosphoglycerate kinase family. Monomer.

The protein localises to the cytoplasm. The catalysed reaction is (2R)-3-phosphoglycerate + ATP = (2R)-3-phospho-glyceroyl phosphate + ADP. The protein operates within carbohydrate degradation; glycolysis; pyruvate from D-glyceraldehyde 3-phosphate: step 2/5. The chain is Phosphoglycerate kinase from Baumannia cicadellinicola subsp. Homalodisca coagulata.